A 312-amino-acid polypeptide reads, in one-letter code: Nucleosome assembly protein 1-like 4 (312 aa).

Positions 24 to 78 (VETLKNKLQALAEQHVDVLESLAPSVRKRVDVLMEIQSQHDELEVKFFEEKAALE) form a coiled coil. Residues 45–60 (LAPSVRKRVDVLMEIQ) carry the Nuclear export signal motif. A disordered region spans residues 289 to 312 (DYGASWVDDEEEDDNNDEYSDEEA).

This sequence belongs to the nucleosome assembly protein (NAP) family.

Its subcellular location is the nucleus. It localises to the cytoplasm. Its function is as follows. May modulate chromatin structure by regulation of nucleosome assembly/disassembly. This chain is Nucleosome assembly protein 1-like 4, found in Oryza sativa subsp. japonica (Rice).